A 606-amino-acid chain; its full sequence is DNA-directed RNA polymerase III subunit RPC3 (606 aa).

A leucine-zipper region spans residues 533–554 (LTFCMADILSNIQQFKNDNKIL).

This sequence belongs to the RNA polymerase beta chain family. Component of the RNA polymerase III (Pol III) complex consisting of 17 subunits.

Its subcellular location is the nucleus. Functionally, DNA-dependent RNA polymerase catalyzes the transcription of DNA into RNA using the four ribonucleoside triphosphates as substrates. Specific core component of RNA polymerase III which synthesizes small RNAs, such as 5S rRNA and tRNAs. The protein is DNA-directed RNA polymerase III subunit RPC3 (RPC82) of Debaryomyces hansenii (strain ATCC 36239 / CBS 767 / BCRC 21394 / JCM 1990 / NBRC 0083 / IGC 2968) (Yeast).